A 265-amino-acid polypeptide reads, in one-letter code: DNA repair protein RecO (265 aa).

The protein belongs to the RecO family.

In terms of biological role, involved in DNA repair and RecF pathway recombination. This Mycobacterium ulcerans (strain Agy99) protein is DNA repair protein RecO.